We begin with the raw amino-acid sequence, 100 residues long: Protamine-2 (100 aa).

Residues 1-45 are disordered; that stretch reads MVRYHVRSPSERPHREYRQLVNGQEQGRHGQEEQGMSAEGVEGYG. Phosphoserine occurs at positions 8, 10, and 37. Residues 8–18 show a composition bias toward basic and acidic residues; that stretch reads SPSERPHREYR.

This sequence belongs to the protamine P2 family. In terms of assembly, interacts with TDRP. Post-translationally, proteolytic processing into mature chains is required for histone eviction during spermatogenesis. Transition proteins (TNP1 and TNP2) are required for processing. As to expression, testis.

It localises to the nucleus. Its subcellular location is the chromosome. Protamines substitute for histones in the chromatin of sperm during the haploid phase of spermatogenesis. They compact sperm DNA into a highly condensed, stable and inactive complex. The protein is Protamine-2 (PRM2) of Alouatta seniculus (Red howler monkey).